A 202-amino-acid chain; its full sequence is D-alanyl-D-alanine dipeptidase (202 aa).

Positions 116 and 123 each coordinate Zn(2+). Residue glutamate 181 is the Proton donor/acceptor of the active site. Position 184 (histidine 184) interacts with Zn(2+).

The protein belongs to the peptidase M15D family. Homodimer. Zn(2+) is required as a cofactor. The cofactor is Fe(2+). Co(2+) serves as cofactor. Requires Ni(2+) as cofactor.

The enzyme catalyses D-alanyl-D-alanine + H2O = 2 D-alanine. Inhibited by aminoalkyl phosphinate analogs. Catalyzes hydrolysis of the D-alanyl-D-alanine dipeptide. The polypeptide is D-alanyl-D-alanine dipeptidase (vanX) (Enterococcus faecium (Streptococcus faecium)).